The following is an 838-amino-acid chain: Protein P (838 aa).

Residues 1–179 (MPLSYQHFRK…FCGSPYSWEQ (179 aa)) form a terminal protein domain (TP) region. The interval 180 to 341 (ELQHSQRHGD…YCLSHLVNLL (162 aa)) is spacer. Residues 218–242 (LGLQPHQGPLATSQPGRSGSIRPRA) form a disordered region. Residues 342 to 685 (EDWGPCVEHG…YLNLYPVARQ (344 aa)) form a polymerase/reverse transcriptase domain (RT) region. The 244-residue stretch at 352-595 (EHHIRIPRTP…YSLNFMGYVI (244 aa)) folds into the Reverse transcriptase domain. Residues D424, D546, and D547 each coordinate Mg(2+).

This sequence belongs to the hepadnaviridae P protein family.

The catalysed reaction is DNA(n) + a 2'-deoxyribonucleoside 5'-triphosphate = DNA(n+1) + diphosphate. The enzyme catalyses Endonucleolytic cleavage to 5'-phosphomonoester.. Activated by host HSP70 and HSP40 in vitro to be able to bind the epsilon loop of the pgRNA. Because deletion of the RNase H region renders the protein partly chaperone-independent, the chaperones may be needed indirectly to relieve occlusion of the RNA-binding site by this domain. Inhibited by several reverse-transcriptase inhibitors: Lamivudine, Adefovir and Entecavir. Functionally, multifunctional enzyme that converts the viral RNA genome into dsDNA in viral cytoplasmic capsids. This enzyme displays a DNA polymerase activity that can copy either DNA or RNA templates, and a ribonuclease H (RNase H) activity that cleaves the RNA strand of RNA-DNA heteroduplexes in a partially processive 3'- to 5'-endonucleasic mode. Neo-synthesized pregenomic RNA (pgRNA) are encapsidated together with the P protein, and reverse-transcribed inside the nucleocapsid. Initiation of reverse-transcription occurs first by binding the epsilon loop on the pgRNA genome, and is initiated by protein priming, thereby the 5'-end of (-)DNA is covalently linked to P protein. Partial (+)DNA is synthesized from the (-)DNA template and generates the relaxed circular DNA (RC-DNA) genome. After budding and infection, the RC-DNA migrates in the nucleus, and is converted into a plasmid-like covalently closed circular DNA (cccDNA). The activity of P protein does not seem to be necessary for cccDNA generation, and is presumably released from (+)DNA by host nuclear DNA repair machinery. The polypeptide is Protein P (Homo sapiens (Human)).